An 89-amino-acid polypeptide reads, in one-letter code: Small ribosomal subunit protein uS15 (89 aa).

Belongs to the universal ribosomal protein uS15 family. As to quaternary structure, part of the 30S ribosomal subunit. Forms a bridge to the 50S subunit in the 70S ribosome, contacting the 23S rRNA.

Functionally, one of the primary rRNA binding proteins, it binds directly to 16S rRNA where it helps nucleate assembly of the platform of the 30S subunit by binding and bridging several RNA helices of the 16S rRNA. Its function is as follows. Forms an intersubunit bridge (bridge B4) with the 23S rRNA of the 50S subunit in the ribosome. The sequence is that of Small ribosomal subunit protein uS15 from Methylococcus capsulatus (strain ATCC 33009 / NCIMB 11132 / Bath).